An 865-amino-acid polypeptide reads, in one-letter code: Envelope glycoprotein gp160 (865 aa).

Residues 1–20 (MRYTIITLGIIVIGIGIVLS) form the signal peptide. The Extracellular segment spans residues 21–705 (KQWITVFYGI…SKWLNILKMG (685 aa)). N35 carries N-linked (GlcNAc...) asparagine; by host glycosylation. C42 and C55 are oxidised to a cystine. Residues N68, N117, N150, N165, N195, N198, N210, N252, N255, N266, N276, N282, N294, N306, N316, N373, N414, N451, N488, and N491 are each glycosylated (N-linked (GlcNAc...) asparagine; by host). 5 disulfide bridges follow: C101–C218, C108–C209, C113–C166, C231–C261, and C241–C253. Residues 113–165 (CVELNSTRERATTPTTTPKSTGLPCVGPTSGENLQSCNASIIEREMEDEPASN) form a V1 region. Positions 166–209 (CTFAMAGYVRDQKKNYYSVVWNDAEIYCKNKTNSTSKECYMIHC) are V2. The tract at residues 311-343 (CRRPGNKTVLPVTIMAGLVFHSQKYNMKLRQAW) is V3. C311 and C344 are oxidised to a cystine. An intrachain disulfide couples C396 to C471. Positions 403-444 (CKMDWFLNYLNNKTWDAYHNFCSSKKKGHAPGPCVQRTYVAY) are V4. Residues 487-494 (KNRTNVTL) form a V5 region. The segment at 537 to 557 (VPFVLGFLGFLGAAGTAMGAA) is fusion peptide. The segment at 600-616 (LNARVTALEKYLEDQAR) is immunosuppression. N645 and N661 each carry an N-linked (GlcNAc...) asparagine; by host glycan. Residues 650 to 675 (EWERQIADLESNITGQLVKAREQEEK) adopt a coiled-coil conformation. Residues 682 to 703 (KLTSWSDFWSWFDFSKWLNILK) are MPER; binding to GalCer. A helical transmembrane segment spans residues 706-726 (FLVIVGIIGLRLLYTVYGCIV). The Cytoplasmic portion of the chain corresponds to 727–865 (RVRQGYVPLS…VRQGLEEILN (139 aa)). The YXXL motif; contains endocytosis signal signature appears at 732–735 (YVPL). Positions 744–763 (VGKGRPDNADEPGEGGDNSR) are disordered.

As to quaternary structure, the mature envelope protein (Env) consists of a homotrimer of non-covalently associated gp120-gp41 heterodimers. The resulting complex protrudes from the virus surface as a spike. Interacts with host CD4 and CCR5. Gp120 also interacts with the C-type lectins CD209/DC-SIGN and CLEC4M/DC-SIGNR (collectively referred to as DC-SIGN(R)). In terms of assembly, the mature envelope protein (Env) consists of a homotrimer of non-covalently associated gp120-gp41 heterodimers. The resulting complex protrudes from the virus surface as a spike. Specific enzymatic cleavages in vivo yield mature proteins. Envelope glycoproteins are synthesized as an inactive precursor that is heavily N-glycosylated and processed likely by host cell furin in the Golgi to yield the mature SU and TM proteins. The cleavage site between SU and TM requires the minimal sequence [KR]-X-[KR]-R.

It is found in the virion membrane. The protein localises to the host cell membrane. The protein resides in the host endosome membrane. Functionally, the surface protein gp120 (SU) attaches the virus to the host lymphoid cell by binding to the primary receptor CD4. This interaction induces a structural rearrangement creating a high affinity binding site for a chemokine coreceptor like CCR5. This peculiar 2 stage receptor-interaction strategy allows gp120 to maintain the highly conserved coreceptor-binding site in a cryptic conformation, protected from neutralizing antibodies. These changes are transmitted to the transmembrane protein gp41 and are thought to activate its fusogenic potential by unmasking its fusion peptide. Surface protein gp120 (SU) may target the virus to gut-associated lymphoid tissue (GALT) by binding host ITGA4/ITGB7 (alpha-4/beta-7 integrins), a complex that mediates T-cell migration to the GALT. Interaction between gp120 and ITGA4/ITGB7 would allow the virus to enter GALT early in the infection, infecting and killing most of GALT's resting CD4+ T-cells. This T-cell depletion is believed to be the major insult to the host immune system leading to AIDS. In terms of biological role, the surface protein gp120 is a ligand for CD209/DC-SIGN and CLEC4M/DC-SIGNR, which are respectively found on dendritic cells (DCs), and on endothelial cells of liver sinusoids and lymph node sinuses. These interactions allow capture of viral particles at mucosal surfaces by these cells and subsequent transmission to permissive cells. DCs are professional antigen presenting cells, critical for host immunity by inducing specific immune responses against a broad variety of pathogens. They act as sentinels in various tissues where they take up antigen, process it, and present it to T-cells following migration to lymphoid organs. SIV subverts the migration properties of dendritic cells to gain access to CD4+ T-cells in lymph nodes. Virus transmission to permissive T-cells occurs either in trans (without DCs infection, through viral capture and transmission), or in cis (following DCs productive infection, through the usual CD4-gp120 interaction), thereby inducing a robust infection. In trans infection, bound virions remain infectious over days and it is proposed that they are not degraded, but protected in non-lysosomal acidic organelles within the DCs close to the cell membrane thus contributing to the viral infectious potential during DCs' migration from the periphery to the lymphoid tissues. On arrival at lymphoid tissues, intact virions recycle back to DCs' cell surface allowing virus transmission to CD4+ T-cells. Virion capture also seems to lead to MHC-II-restricted viral antigen presentation, and probably to the activation of SIV-specific CD4+ cells. Its function is as follows. The transmembrane protein gp41 (TM) acts as a class I viral fusion protein. Under the current model, the protein has at least 3 conformational states: pre-fusion native state, pre-hairpin intermediate state, and post-fusion hairpin state. During fusion of viral and target intracellular membranes, the coiled coil regions (heptad repeats) assume a trimer-of-hairpins structure, positioning the fusion peptide in close proximity to the C-terminal region of the ectodomain. The formation of this structure appears to drive apposition and subsequent fusion of viral and target cell membranes. Complete fusion occurs in host cell endosomes. The virus undergoes clathrin-dependent internalization long before endosomal fusion, thus minimizing the surface exposure of conserved viral epitopes during fusion and reducing the efficacy of inhibitors targeting these epitopes. Membranes fusion leads to delivery of the nucleocapsid into the cytoplasm. Functionally, the envelope glycoprotein gp160 precursor down-modulates cell surface CD4 antigen by interacting with it in the endoplasmic reticulum and blocking its transport to the cell surface. The gp120-gp41 heterodimer allows rapid transcytosis of the virus through CD4 negative cells such as simple epithelial monolayers of the intestinal, rectal and endocervical epithelial barriers. Both gp120 and gp41 specifically recognize glycosphingolipids galactosyl-ceramide (GalCer) or 3' sulfo-galactosyl-ceramide (GalS) present in the lipid rafts structures of epithelial cells. Binding to these alternative receptors allows the rapid transcytosis of the virus through the epithelial cells. This transcytotic vesicle-mediated transport of virions from the apical side to the basolateral side of the epithelial cells does not involve infection of the cells themselves. In Simian immunodeficiency virus agm.vervet (isolate AGM TYO-1) (SIV-agm.ver), this protein is Envelope glycoprotein gp160 (env).